The chain runs to 387 residues: GTPase Obg (387 aa).

Residues 1 to 159 form the Obg domain; that stretch reads MKFVDEAIIR…RSLKLELLLL (159 aa). The OBG-type G domain maps to 160-333; that stretch reads ADVGLLGMPN…LAVKLLDFIA (174 aa). GTP contacts are provided by residues 166-173, 191-195, 213-216, 283-286, and 314-316; these read GMPNAGKS, FTTLV, DIPG, NKAD, and SAY. The Mg(2+) site is built by Ser-173 and Thr-193.

This sequence belongs to the TRAFAC class OBG-HflX-like GTPase superfamily. OBG GTPase family. As to quaternary structure, monomer. Mg(2+) is required as a cofactor.

Its subcellular location is the cytoplasm. Its function is as follows. An essential GTPase which binds GTP, GDP and possibly (p)ppGpp with moderate affinity, with high nucleotide exchange rates and a fairly low GTP hydrolysis rate. Plays a role in control of the cell cycle, stress response, ribosome biogenesis and in those bacteria that undergo differentiation, in morphogenesis control. The chain is GTPase Obg from Shewanella halifaxensis (strain HAW-EB4).